A 406-amino-acid polypeptide reads, in one-letter code: 5-hydroxytryptamine receptor 4 (406 aa).

The Extracellular portion of the chain corresponds to 1-19 (MDRLDANVSSNEGFGSVEK). An N-linked (GlcNAc...) asparagine glycan is attached at N7. Residues 20 to 44 (VVLLTFFAMVILMAILGNLLVMVAV) traverse the membrane as a helical segment. Residues 45-54 (CRDRQLRKIK) lie on the Cytoplasmic side of the membrane. A helical transmembrane segment spans residues 55 to 78 (TNYFIVSLAFADLLVSVLVNAFGA). Residues 79–92 (IELVQDIWFYGEMF) are Extracellular-facing. Residues 93–117 (CLVRTSLDVLLTTASIFHLCCISLD) form a helical membrane-spanning segment. C93 and C184 form a disulfide bridge. D100 contacts serotonin. Residues 118–133 (RYYAICCQPLVYRNKM) are Cytoplasmic-facing. A helical membrane pass occupies residues 134 to 157 (TPLRIALMLGGCWVIPMFISFLPI). Residues 158–188 (MQGWNNIGIVDVIEKRKFNHNSNSTFCVFMV) lie on the Extracellular side of the membrane. The helical transmembrane segment at 189–212 (NKPYAITCSVVAFYIPFLLMVLAY) threads the bilayer. Topologically, residues 213 to 257 (YRIYVTAKEHAQQIQMLQRAGATSESRPQTADQHSTHRMRTETKA) are cytoplasmic. A helical transmembrane segment spans residues 258–283 (AKTLCVIMGCFCFCWAPFFVTNIVDP). N279 contacts serotonin. Residues 284 to 290 (FIDYTVP) lie on the Extracellular side of the membrane. A helical transmembrane segment spans residues 291–314 (EKVWTAFLWLGYINSGLNPFLYAF). The Cytoplasmic portion of the chain corresponds to 315–406 (LNKSFRRAFL…DSCSLKRSQS (92 aa)).

It belongs to the G-protein coupled receptor 1 family. As to quaternary structure, interacts (via C-terminus 330-346 AA) with GRK5; this interaction is promoted by 5-HT (serotonin). As to expression, in brain, isoform 5-HT4S is restricted to the striatum. In peripheral tissues, differential expression is also observed in the atrium of the heart where only isoform 5-HT4S is detectable. In terms of tissue distribution, in brain, isoform 5-HT4L is expressed throughout the brain, except in the cerebellum.

Its subcellular location is the cell membrane. It is found in the endosome membrane. Functionally, G-protein coupled receptor for 5-hydroxytryptamine (serotonin), a biogenic hormone that functions as a neurotransmitter, a hormone and a mitogen. Ligand binding causes a conformation change that triggers signaling via guanine nucleotide-binding proteins (G proteins) and modulates the activity of downstream effectors. HTR4 is coupled to G(s) G alpha proteins and mediates activation of adenylate cyclase activity. The polypeptide is 5-hydroxytryptamine receptor 4 (Htr4) (Rattus norvegicus (Rat)).